Consider the following 645-residue polypeptide: UPF0313 protein CLM_0251 (645 aa).

The Radical SAM core domain maps to 295–566 (AIKEVKFSIT…RMQRALLQFS (272 aa)). Residues Cys-309, Cys-313, and Cys-316 each contribute to the [4Fe-4S] cluster site. Positions 598–645 (NKPYKKSHKKNNAKNNNNHYNKNNNYNKNKDISKKNKKNSLSKHKKRK) are disordered. Positions 600–609 (PYKKSHKKNN) are enriched in basic residues. A compositionally biased stretch (low complexity) spans 610–624 (AKNNNNHYNKNNNYN). A compositionally biased stretch (basic residues) spans 632 to 645 (KNKKNSLSKHKKRK).

The protein belongs to the UPF0313 family. The cofactor is [4Fe-4S] cluster.

This chain is UPF0313 protein CLM_0251, found in Clostridium botulinum (strain Kyoto / Type A2).